Here is a 172-residue protein sequence, read N- to C-terminus: 3-hydroxydecanoyl-[acyl-carrier-protein] dehydratase (172 aa).

His-71 is an active-site residue.

It belongs to the thioester dehydratase family. FabA subfamily. As to quaternary structure, homodimer.

Its subcellular location is the cytoplasm. It catalyses the reaction a (3R)-hydroxyacyl-[ACP] = a (2E)-enoyl-[ACP] + H2O. The catalysed reaction is (3R)-hydroxydecanoyl-[ACP] = (2E)-decenoyl-[ACP] + H2O. It carries out the reaction (2E)-decenoyl-[ACP] = (3Z)-decenoyl-[ACP]. It functions in the pathway lipid metabolism; fatty acid biosynthesis. Necessary for the introduction of cis unsaturation into fatty acids. Catalyzes the dehydration of (3R)-3-hydroxydecanoyl-ACP to E-(2)-decenoyl-ACP and then its isomerization to Z-(3)-decenoyl-ACP. Can catalyze the dehydratase reaction for beta-hydroxyacyl-ACPs with saturated chain lengths up to 16:0, being most active on intermediate chain length. This is 3-hydroxydecanoyl-[acyl-carrier-protein] dehydratase from Maricaulis maris (strain MCS10) (Caulobacter maris).